Consider the following 45-residue polypeptide: Mu-conotoxin-like Cal 12.1.2g (45 aa).

4 disulfide bridges follow: cysteine 3–cysteine 16, cysteine 11–cysteine 28, cysteine 18–cysteine 33, and cysteine 27–cysteine 39. The residue at position 23 (proline 23) is a 4-hydroxyproline. 2 positions are modified to 6'-bromotryptophan: tryptophan 37 and tryptophan 38. At proline 40 the chain carries 4-hydroxyproline.

As to expression, expressed by the venom duct.

The protein localises to the secreted. In terms of biological role, mu-conotoxins block voltage-gated sodium channels. This toxin reversibly blocks voltage-gated sodium channel in cephalopods, with no alteration in the voltage dependence of sodium conductance or on the kinetics of inactivation. The chain is Mu-conotoxin-like Cal 12.1.2g from Californiconus californicus (California cone).